Here is a 421-residue protein sequence, read N- to C-terminus: General transcription factor IIH subunit 2 (421 aa).

A disordered region spans residues 1–26; sequence MSNQRKRSNDEREEEDDEDAEGIGEW. Acidic residues predominate over residues 11-24; sequence EREEEDDEDAEGIG. The 190-residue stretch at 83–272 folds into the VWFA domain; the sequence is YLYIVIDFSR…IAEFAIANLI (190 aa). The segment at 362 to 408 adopts an RING-type zinc-finger fold; that stretch reads CFGCQQSLIGAGNKPVPCVTCRKCKHYFCLDCDIYIHESLHNCPGCE.

It belongs to the GTF2H2 family. In terms of assembly, component of the 7-subunit TFIIH core complex composed of XPB, XPD, TFB1/GTF2H1, GTF2H2/P44, TFB4/GTF2H3, TFB2/GTF2H4 and TFB5/GTF2H5, which is active in NER. The core complex associates with the 3-subunit CDK-activating kinase (CAK) module composed of CYCH1/cyclin H1, CDKD and MAT1/At4g30820 to form the 10-subunit holoenzyme (holo-TFIIH) active in transcription. Interacts with XPD.

The protein resides in the nucleus. Its function is as follows. Component of the general transcription and DNA repair factor IIH (TFIIH) core complex, which is involved in general and transcription-coupled nucleotide excision repair (NER) of damaged DNA and, when complexed to CAK, in RNA transcription by RNA polymerase II. In NER, TFIIH acts by opening DNA around the lesion to allow the excision of the damaged oligonucleotide and its replacement by a new DNA fragment. In transcription, TFIIH has an essential role in transcription initiation. When the pre-initiation complex (PIC) has been established, TFIIH is required for promoter opening and promoter escape. Phosphorylation of the C-terminal tail (CTD) of the largest subunit of RNA polymerase II by the kinase module CAK controls the initiation of transcription. Can restore UV resistance in the NER-deficient ssl1-1 yeast mutant. This chain is General transcription factor IIH subunit 2, found in Arabidopsis thaliana (Mouse-ear cress).